A 477-amino-acid polypeptide reads, in one-letter code: Bifunctional protein HldE (477 aa).

Residues 1-318 are ribokinase; it reads MKVTLPEFER…ENAVRGRADT (318 aa). K179 bears the N6-acetyllysine mark. 195-198 provides a ligand contact to ATP; it reads NLSE. Residue D264 is part of the active site. A cytidylyltransferase region spans residues 344-477; that stretch reads MTNGVFDILH…IKKIQQDKKG (134 aa).

It in the N-terminal section; belongs to the carbohydrate kinase PfkB family. The protein in the C-terminal section; belongs to the cytidylyltransferase family. In terms of assembly, homodimer.

The enzyme catalyses D-glycero-beta-D-manno-heptose 7-phosphate + ATP = D-glycero-beta-D-manno-heptose 1,7-bisphosphate + ADP + H(+). It carries out the reaction D-glycero-beta-D-manno-heptose 1-phosphate + ATP + H(+) = ADP-D-glycero-beta-D-manno-heptose + diphosphate. It functions in the pathway nucleotide-sugar biosynthesis; ADP-L-glycero-beta-D-manno-heptose biosynthesis; ADP-L-glycero-beta-D-manno-heptose from D-glycero-beta-D-manno-heptose 7-phosphate: step 1/4. It participates in nucleotide-sugar biosynthesis; ADP-L-glycero-beta-D-manno-heptose biosynthesis; ADP-L-glycero-beta-D-manno-heptose from D-glycero-beta-D-manno-heptose 7-phosphate: step 3/4. Functionally, catalyzes the phosphorylation of D-glycero-D-manno-heptose 7-phosphate at the C-1 position to selectively form D-glycero-beta-D-manno-heptose-1,7-bisphosphate. In terms of biological role, catalyzes the ADP transfer from ATP to D-glycero-beta-D-manno-heptose 1-phosphate, yielding ADP-D-glycero-beta-D-manno-heptose. This Escherichia coli O9:H4 (strain HS) protein is Bifunctional protein HldE.